A 133-amino-acid polypeptide reads, in one-letter code: Snaclec purpureotin subunit alpha (133 aa).

3 disulfide bridges follow: C2–C13, C30–C127, and C102–C119. Residues 9–128 (FKQYCYQIIK…CEQKHIFMCK (120 aa)) enclose the C-type lectin domain.

Belongs to the snaclec family. In terms of assembly, homodimer (non-covalently linked) of heterodimer of alpha and beta subunits (disulfide-linked). In terms of tissue distribution, expressed by the venom gland.

It is found in the secreted. Snaclec that induces platelet aggregation without any cofactor in a dose-dependent manner. Its platelet aggregation effect is blocked by echicetin, suggesting it is a GPIb-binding protein which binds to the same or a closely related GPIb site on platelets as echicetin. The sequence is that of Snaclec purpureotin subunit alpha from Trimeresurus purpureomaculatus (Mangrove pit viper).